We begin with the raw amino-acid sequence, 403 residues long: Probable N-acetyltransferase HLS1 (403 aa).

The N-acetyltransferase domain maps to 2–177 (TVVREYDPTR…VNPVYAHRVN (176 aa)).

Belongs to the acetyltransferase family.

Its function is as follows. Ethylene-responsive N-acetyltransferase required for differential cell elongation in the hypocotyl. Regulates apical hook formation of dark-grown seedlings. May control differential cell growth by regulating auxin activity. May be involved in negative feedback regulation of auxin homeostasis through the control of GH3-like genes. Modulates de novo shoot organogenesis. In Arabidopsis thaliana (Mouse-ear cress), this protein is Probable N-acetyltransferase HLS1 (HLS1).